A 331-amino-acid chain; its full sequence is Vitamin B12 import system permease protein BtuC (331 aa).

9 helical membrane passes run 20–42, 62–84, 91–113, 118–140, 147–169, 189–208, 240–262, 277–299, and 306–325; these read IMSVVLVLLSTIHLMVGEVFLSP, LVAAAMIGAALAVSGATLQVLLG, GVLGISGGASLAMVLVMFALPVL, IFMLAAIAGSMLFTLILVGIARA, RLLLVGVALGILSSAIVTWAFYF, ASWYQHTVTLVMLPVLVWLC, LAISVLVGCSVALGGIISFVGLV, YLLPLSAIFGAALLVFADIGARL, and LPLGVMTTSIGAPIFIWMLV.

It belongs to the binding-protein-dependent transport system permease family. FecCD subfamily. The complex is composed of two ATP-binding proteins (BtuD), two transmembrane proteins (BtuC) and a solute-binding protein (BtuF).

The protein resides in the cell inner membrane. Part of the ABC transporter complex BtuCDF involved in vitamin B12 import. Involved in the translocation of the substrate across the membrane. In Vibrio parahaemolyticus serotype O3:K6 (strain RIMD 2210633), this protein is Vitamin B12 import system permease protein BtuC.